A 184-amino-acid polypeptide reads, in one-letter code: ATP synthase subunit b, chloroplastic (184 aa).

Residues 27 to 49 (LATNPINLSVVLGVLIFFGKGVL) form a helical membrane-spanning segment.

Belongs to the ATPase B chain family. In terms of assembly, F-type ATPases have 2 components, F(1) - the catalytic core - and F(0) - the membrane proton channel. F(1) has five subunits: alpha(3), beta(3), gamma(1), delta(1), epsilon(1). F(0) has four main subunits: a(1), b(1), b'(1) and c(10-14). The alpha and beta chains form an alternating ring which encloses part of the gamma chain. F(1) is attached to F(0) by a central stalk formed by the gamma and epsilon chains, while a peripheral stalk is formed by the delta, b and b' chains.

The protein localises to the plastid. It localises to the chloroplast thylakoid membrane. F(1)F(0) ATP synthase produces ATP from ADP in the presence of a proton or sodium gradient. F-type ATPases consist of two structural domains, F(1) containing the extramembraneous catalytic core and F(0) containing the membrane proton channel, linked together by a central stalk and a peripheral stalk. During catalysis, ATP synthesis in the catalytic domain of F(1) is coupled via a rotary mechanism of the central stalk subunits to proton translocation. Functionally, component of the F(0) channel, it forms part of the peripheral stalk, linking F(1) to F(0). The sequence is that of ATP synthase subunit b, chloroplastic from Atropa belladonna (Belladonna).